Reading from the N-terminus, the 232-residue chain is 7-cyano-7-deazaguanine synthase (232 aa).

Residue 8 to 18 (FSGGQDSTTCL) coordinates ATP. The Zn(2+) site is built by Cys187, Cys196, Cys199, and Cys202.

This sequence belongs to the QueC family. Zn(2+) is required as a cofactor.

The enzyme catalyses 7-carboxy-7-deazaguanine + NH4(+) + ATP = 7-cyano-7-deazaguanine + ADP + phosphate + H2O + H(+). It functions in the pathway purine metabolism; 7-cyano-7-deazaguanine biosynthesis. In terms of biological role, catalyzes the ATP-dependent conversion of 7-carboxy-7-deazaguanine (CDG) to 7-cyano-7-deazaguanine (preQ(0)). The sequence is that of 7-cyano-7-deazaguanine synthase from Shewanella denitrificans (strain OS217 / ATCC BAA-1090 / DSM 15013).